Consider the following 497-residue polypeptide: Guanosine-5'-triphosphate,3'-diphosphate pyrophosphatase (497 aa).

The protein belongs to the GppA/Ppx family. GppA subfamily.

It catalyses the reaction guanosine 3'-diphosphate 5'-triphosphate + H2O = guanosine 3',5'-bis(diphosphate) + phosphate + H(+). It participates in purine metabolism; ppGpp biosynthesis; ppGpp from GTP: step 2/2. Catalyzes the conversion of pppGpp to ppGpp. Guanosine pentaphosphate (pppGpp) is a cytoplasmic signaling molecule which together with ppGpp controls the 'stringent response', an adaptive process that allows bacteria to respond to amino acid starvation, resulting in the coordinated regulation of numerous cellular activities. This chain is Guanosine-5'-triphosphate,3'-diphosphate pyrophosphatase, found in Vibrio vulnificus (strain YJ016).